The primary structure comprises 465 residues: MTTVDTILAAKYPAKAHALRVSESLKARHGGAGVIYLEAQKTRLIEDSDEDMPFRQRRPFFYLTGCLLPDAAVVYDAVKDELTLFIPPINPESVIWSGLPLSPEEAAKLYDVDRVLFTTDVNSTLASIASSHNGQTAAFAIAEQVSEGTSFQGFAETNTTSLKTAIEETRVIKDAYEVALLRKANDISTKAHVAAIHASKTATNERQIEAAIIGACIANGCREQSYHPIVAGGEGGATLHYVRNDVDLVDPVTKQRKNNVLIDAGGEYQTYCADITRVIPLNGRFAPETRQIYEIVLQMQTECIAMLKEGVCWDDVHALAHRIAIRGLLKLGILRGSEDELFEKRVSVAFFPHGLGHYLGMDTHDTGGNPNYEDKDTMFRYLRVRANLPAGSVVTVEPGIYFCRFIIDPILKAPETGKYIDTEVLERYWSVGGVRIEDNIHITKDGSENLTTAPKSIEEVESLAL.

The Mn(2+) site is built by aspartate 263, aspartate 274, glutamate 397, and glutamate 437.

It belongs to the peptidase M24B family. Requires Mn(2+) as cofactor.

The enzyme catalyses Release of any N-terminal amino acid, including proline, that is linked to proline, even from a dipeptide or tripeptide.. Its function is as follows. Catalyzes the removal of a penultimate prolyl residue from the N-termini of peptides. The chain is Probable Xaa-Pro aminopeptidase pepP (pepP) from Penicillium rubens (strain ATCC 28089 / DSM 1075 / NRRL 1951 / Wisconsin 54-1255) (Penicillium chrysogenum).